A 125-amino-acid chain; its full sequence is Holo-[acyl-carrier-protein] synthase (125 aa).

Residues Asp-8 and Glu-57 each coordinate Mg(2+).

It belongs to the P-Pant transferase superfamily. AcpS family. Requires Mg(2+) as cofactor.

The protein resides in the cytoplasm. The enzyme catalyses apo-[ACP] + CoA = holo-[ACP] + adenosine 3',5'-bisphosphate + H(+). Its function is as follows. Transfers the 4'-phosphopantetheine moiety from coenzyme A to a Ser of acyl-carrier-protein. The protein is Holo-[acyl-carrier-protein] synthase of Neisseria meningitidis serogroup C (strain 053442).